The primary structure comprises 37 residues: 24 kDa antigen (37 aa).

This is 24 kDa antigen from Plasmodium chabaudi.